The following is a 669-amino-acid chain: DNA ligase (669 aa).

Residues 34-38, 83-84, and E114 each bind NAD(+); these read DAEYD and SL. K116 acts as the N6-AMP-lysine intermediate in catalysis. Residues R137, E171, K287, and K311 each contribute to the NAD(+) site. C405, C408, C423, and C428 together coordinate Zn(2+). One can recognise a BRCT domain in the interval 591 to 669; it reads NIASYFAGKT…EERFLQELNK (79 aa).

Belongs to the NAD-dependent DNA ligase family. LigA subfamily. It depends on Mg(2+) as a cofactor. Mn(2+) is required as a cofactor.

The enzyme catalyses NAD(+) + (deoxyribonucleotide)n-3'-hydroxyl + 5'-phospho-(deoxyribonucleotide)m = (deoxyribonucleotide)n+m + AMP + beta-nicotinamide D-nucleotide.. Functionally, DNA ligase that catalyzes the formation of phosphodiester linkages between 5'-phosphoryl and 3'-hydroxyl groups in double-stranded DNA using NAD as a coenzyme and as the energy source for the reaction. It is essential for DNA replication and repair of damaged DNA. The protein is DNA ligase of Bacillus cytotoxicus (strain DSM 22905 / CIP 110041 / 391-98 / NVH 391-98).